The chain runs to 121 residues: Chromosome transmission fidelity protein 8 homolog (121 aa).

The protein belongs to the CTF8 family. In terms of assembly, component of the CTF18-RFC complex, which consists of CTF18, CTF8, DSCC1, RFC2, RFC3, RFC4 and RFC5. The CTF18-RFC complex does not interact with the Rad9/Rad1/Hus1 complex. The CTF18-RFC complex interacts with POLH. CTF18/CTF8/DSCC1 associate with PCNA. CTF8 exists as a dimer with DSCC1.

Its subcellular location is the nucleus. Chromosome cohesion factor involved in sister chromatid cohesion and fidelity of chromosome transmission. Component of one of the cell nuclear antigen loader complexes, CTF18-replication factor C (CTF18-RFC), which consists of CTF18, CTF8, DSCC1, RFC2, RFC3, RFC4 and RFC5. The CTF18-RFC complex binds to single-stranded and primed DNAs and has weak ATPase activity that is stimulated the presence of primed DNA, replication protein A (RPA) and proliferating cell nuclear antigen (PCNA). The CTF18-RFC complex catalyzes the ATP-dependent loading of PCNA onto primed and gapped DNA. It also interacts with and stimulates POLH, which is suggestive of a protein network that coordinates DNA repair, recombination and chromosome cohesion reactions with replication fork progression. The sequence is that of Chromosome transmission fidelity protein 8 homolog from Homo sapiens (Human).